Here is a 346-residue protein sequence, read N- to C-terminus: WD repeat-containing protein LWD1 (346 aa).

Met1 carries the post-translational modification N-acetylmethionine. WD repeat units follow at residues 79–121 (EHPY…SRVE), 133–173 (EFCG…VDTQ), 176–214 (AHDKEVFDIAWGGVGVFASVSADGSVRVFDLRDKEHSTI), and 265–305 (RHQA…QHVE).

The protein resides in the nucleus. Its function is as follows. Clock protein essential for the proper expression phase and period length of both the oscillator and output genes known to participate in photoperiod sensing. Required for the expression of APRR9, APRR7, and APRR5. Regulated by APRR9 and APRR7 at the transcriptional level, indicating the existence of a positive feedback loop within the circadian clock. May function to delay the expression of the morning genes until dawn approaches. The protein is WD repeat-containing protein LWD1 (LWD1) of Arabidopsis thaliana (Mouse-ear cress).